Consider the following 330-residue polypeptide: GTPase Obg (330 aa).

Positions 1-159 (MHFIDEVKIY…MWIHLSLKLL (159 aa)) constitute an Obg domain. An OBG-type G domain is found at 160–327 (SDVGLVGLPN…IVKLALETIK (168 aa)). Residues 166 to 173 (GLPNAGKS), 191 to 195 (FTTLV), 212 to 215 (DIPG), 279 to 282 (NKCD), and 308 to 310 (STC) contribute to the GTP site. Mg(2+) contacts are provided by S173 and T193.

This sequence belongs to the TRAFAC class OBG-HflX-like GTPase superfamily. OBG GTPase family. As to quaternary structure, monomer. Requires Mg(2+) as cofactor.

It is found in the cytoplasm. In terms of biological role, an essential GTPase which binds GTP, GDP and possibly (p)ppGpp with moderate affinity, with high nucleotide exchange rates and a fairly low GTP hydrolysis rate. Plays a role in control of the cell cycle, stress response, ribosome biogenesis and in those bacteria that undergo differentiation, in morphogenesis control. This is GTPase Obg from Rickettsia rickettsii (strain Iowa).